Consider the following 490-residue polypeptide: Betaine aldehyde dehydrogenase (490 aa).

Asp-93 contacts K(+). 150–152 contributes to the NAD(+) binding site; sequence GAW. Lys-162 acts as the Charge relay system in catalysis. 176–179 lines the NAD(+) pocket; it reads KPSE. K(+) is bound at residue Val-180. 230 to 233 contacts NAD(+); that stretch reads GIAS. Leu-246 provides a ligand contact to K(+). The active-site Proton acceptor is the Glu-252. NAD(+) contacts are provided by Gly-254, Cys-286, and Glu-387. Catalysis depends on Cys-286, which acts as the Nucleophile. Cys-286 carries the cysteine sulfenic acid (-SOH) modification. Residues Lys-457 and Gly-460 each coordinate K(+). The active-site Charge relay system is Glu-464.

It belongs to the aldehyde dehydrogenase family. Dimer of dimers. The cofactor is K(+).

It catalyses the reaction betaine aldehyde + NAD(+) + H2O = glycine betaine + NADH + 2 H(+). It functions in the pathway amine and polyamine biosynthesis; betaine biosynthesis via choline pathway; betaine from betaine aldehyde: step 1/1. Functionally, involved in the biosynthesis of the osmoprotectant glycine betaine. Catalyzes the irreversible oxidation of betaine aldehyde to the corresponding acid. This Yersinia pestis protein is Betaine aldehyde dehydrogenase.